Consider the following 294-residue polypeptide: MTQDYIVKALAFDGDIRAYAAVTTNAVQEAQTRHYTWPTASAALGRTMTATAMMGAMLKGDQKLTVTVDGHGPIGRIVADADAKGDIRGYVTNPQTHFPLNDQGKLDVRRAVGTDGTLTVVKDVGLKDYFSGSSPIVSGELGDDFTYYYATSEQVPSSVGLGVLVNPDNSIKAAGGFIIQVMPNAKEETIDKVEKAIGNMTPVSKLIDQGLSPEELLTEILGKENVKFLETVPVKFECNCSHEKFLNAIKGLGEAEIQAMIDEDHGAEAECHFCRAKYQYSEAELKGLIEELNA.

2 disulfides stabilise this stretch: C238-C240 and C271-C274.

This sequence belongs to the HSP33 family. Under oxidizing conditions two disulfide bonds are formed involving the reactive cysteines. Under reducing conditions zinc is bound to the reactive cysteines and the protein is inactive.

The protein localises to the cytoplasm. Redox regulated molecular chaperone. Protects both thermally unfolding and oxidatively damaged proteins from irreversible aggregation. Plays an important role in the bacterial defense system toward oxidative stress. In Staphylococcus carnosus (strain TM300), this protein is 33 kDa chaperonin.